The following is a 464-amino-acid chain: Chitobiosyldiphosphodolichol beta-mannosyltransferase (464 aa).

Over Met1–Ala2 the chain is Lumenal. The helical transmembrane segment at Ala3 to Trp23 threads the bilayer. Over Lys24 to Arg99 the chain is Cytoplasmic. The segment at residues Val100–Trp120 is an intramembrane region (helical). At Arg121–Thr464 the chain is on the cytoplasmic side. Phosphoserine is present on Ser242. The tract at residues Pro243–Glu262 is disordered.

The protein belongs to the glycosyltransferase group 1 family. Glycosyltransferase 33 subfamily.

Its subcellular location is the endoplasmic reticulum membrane. The catalysed reaction is an N,N'-diacetylchitobiosyl-diphospho-di-trans,poly-cis-dolichol + GDP-alpha-D-mannose = a beta-D-Man-(1-&gt;4)-beta-D-GlcNAc-(1-&gt;4)-alpha-D-GlcNAc-diphospho-di-trans,poly-cis-dolichol + GDP + H(+). The protein operates within protein modification; protein glycosylation. Mannosyltransferase that operates in the biosynthetic pathway of dolichol-linked oligosaccharides, the glycan precursors employed in protein asparagine (N)-glycosylation. The assembly of dolichol-linked oligosaccharides begins on the cytosolic side of the endoplasmic reticulum membrane and finishes in its lumen. The sequential addition of sugars to dolichol pyrophosphate produces dolichol-linked oligosaccharides containing fourteen sugars, including two GlcNAcs, nine mannoses and three glucoses. Once assembled, the oligosaccharide is transferred from the lipid to nascent proteins by oligosaccharyltransferases. Catalyzes, on the cytoplasmic face of the endoplasmic reticulum, the addition of the first mannose residues to the dolichol-linked oligosaccharide chain, to produce Man1GlcNAc(2)-PP-dolichol core oligosaccharide. Man1GlcNAc(2)-PP-dolichol is a substrate for ALG2, the following enzyme in the biosynthetic pathway. The protein is Chitobiosyldiphosphodolichol beta-mannosyltransferase of Homo sapiens (Human).